The chain runs to 117 residues: Large ribosomal subunit protein bL20 (117 aa).

The protein belongs to the bacterial ribosomal protein bL20 family.

In terms of biological role, binds directly to 23S ribosomal RNA and is necessary for the in vitro assembly process of the 50S ribosomal subunit. It is not involved in the protein synthesizing functions of that subunit. This Mycoplasma mobile (strain ATCC 43663 / 163K / NCTC 11711) (Mesomycoplasma mobile) protein is Large ribosomal subunit protein bL20.